We begin with the raw amino-acid sequence, 504 residues long: Maturase K (504 aa).

The protein belongs to the intron maturase 2 family. MatK subfamily.

Its subcellular location is the plastid. It is found in the chloroplast. Its function is as follows. Usually encoded in the trnK tRNA gene intron. Probably assists in splicing its own and other chloroplast group II introns. In Quercus petraea (Durmast oak), this protein is Maturase K.